Consider the following 196-residue polypeptide: Carnitine operon protein CaiE (196 aa).

Residues 173–196 (TQPLRQMEENRPRLQGTTDVTPKR) are disordered. Residues 187-196 (QGTTDVTPKR) are compositionally biased toward polar residues.

The protein belongs to the transferase hexapeptide repeat family.

It functions in the pathway amine and polyamine metabolism; carnitine metabolism. Functionally, overproduction of CaiE stimulates the activity of CaiB and CaiD. The sequence is that of Carnitine operon protein CaiE from Shigella dysenteriae serotype 1 (strain Sd197).